Reading from the N-terminus, the 351-residue chain is Serine/threonine-protein kinase ZRK1 (351 aa).

The Protein kinase domain occupies 60 to 347 (FDSSCFVSQD…KELKQIEASL (288 aa)). ATP-binding positions include 66–74 (VSQDVYYKW) and Lys-87. The Proton acceptor role is filled by Asp-191.

It belongs to the protein kinase superfamily. Ser/Thr protein kinase family. ZRK subfamily. As to quaternary structure, component of a stable high-order oligomeric complex made of RKS1 and RPP13L4/ZAR1 which recruits Xanthomonas campestris effector XopAC/AvrAC-mediated uridylylated PBL2 in the presence of ATP to form a wheel-like pentameric resistosome; this complex triggers immunity toward X.campestris in vascular tissues. Interacts with RPP13L4/ZAR1 and uridylylated PBL2. Expressed at high levels in germinating seeds and at lower levels in adult leaves.

The catalysed reaction is L-seryl-[protein] + ATP = O-phospho-L-seryl-[protein] + ADP + H(+). The enzyme catalyses L-threonyl-[protein] + ATP = O-phospho-L-threonyl-[protein] + ADP + H(+). In terms of biological role, serine/threonine-protein kinase that confers a broad-spectrum quantitative disease resistance (QDR) to the pathogenic biotrophic bacteria Xanthomonas campestris (e.g. pv. campestris (Xcc), pv. raphani, pv. armoriaceae and pv. incanae) by restricting bacterial spread to the vascular system from the infection site; X.campestris causes black rot disease in crops. Seems to not have any kinase activity. The protein is Serine/threonine-protein kinase ZRK1 of Arabidopsis thaliana (Mouse-ear cress).